Here is a 398-residue protein sequence, read N- to C-terminus: Formate-dependent phosphoribosylglycinamide formyltransferase (398 aa).

N(1)-(5-phospho-beta-D-ribosyl)glycinamide is bound by residues 21–22 (EL) and E81. Residues R113, K154, 194–197 (EEYV), and E202 contribute to the ATP site. The 197-residue stretch at 118–314 (RFAAEKVKVP…EFQVHVRSAL (197 aa)) folds into the ATP-grasp domain. Residues E273 and E285 each contribute to the Mg(2+) site. N(1)-(5-phospho-beta-D-ribosyl)glycinamide-binding positions include D292, K362, and 369-370 (RR).

The protein belongs to the PurK/PurT family. As to quaternary structure, homodimer.

It carries out the reaction N(1)-(5-phospho-beta-D-ribosyl)glycinamide + formate + ATP = N(2)-formyl-N(1)-(5-phospho-beta-D-ribosyl)glycinamide + ADP + phosphate + H(+). Its pathway is purine metabolism; IMP biosynthesis via de novo pathway; N(2)-formyl-N(1)-(5-phospho-D-ribosyl)glycinamide from N(1)-(5-phospho-D-ribosyl)glycinamide (formate route): step 1/1. Involved in the de novo purine biosynthesis. Catalyzes the transfer of formate to 5-phospho-ribosyl-glycinamide (GAR), producing 5-phospho-ribosyl-N-formylglycinamide (FGAR). Formate is provided by PurU via hydrolysis of 10-formyl-tetrahydrofolate. The polypeptide is Formate-dependent phosphoribosylglycinamide formyltransferase (Sulfolobus acidocaldarius (strain ATCC 33909 / DSM 639 / JCM 8929 / NBRC 15157 / NCIMB 11770)).